The chain runs to 458 residues: Argininosuccinate lyase (458 aa).

This sequence belongs to the lyase 1 family. Argininosuccinate lyase subfamily.

It localises to the cytoplasm. The catalysed reaction is 2-(N(omega)-L-arginino)succinate = fumarate + L-arginine. It participates in amino-acid biosynthesis; L-arginine biosynthesis; L-arginine from L-ornithine and carbamoyl phosphate: step 3/3. The chain is Argininosuccinate lyase from Geotalea daltonii (strain DSM 22248 / JCM 15807 / FRC-32) (Geobacter daltonii).